An 85-amino-acid polypeptide reads, in one-letter code: CDC42 small effector protein 2 (85 aa).

Residues Cys-10 and Cys-11 are each lipidated (S-palmitoyl cysteine). The 14-residue stretch at 29 to 42 (IGEPTNFVHTAHVG) folds into the CRIB domain.

It belongs to the CDC42SE/SPEC family.

The protein localises to the cytoplasm. Its subcellular location is the cytoskeleton. It localises to the cell membrane. Functionally, probably involved in the organization of the actin cytoskeleton by acting downstream of CDC42, inducing actin filament assembly. The sequence is that of CDC42 small effector protein 2 (cdc42se2) from Danio rerio (Zebrafish).